Consider the following 218-residue polypeptide: Mitochondrial fission factor (218 aa).

At 1–198 (MAEISRIQYE…ENKERAKREM (198 aa)) the chain is on the cytoplasmic side. At T89 the chain carries Phosphothreonine. A phosphoserine mark is found at S129, S131, S146, and S171. Residues 167 to 198 (VDAASLRRQIIKLNRRLQLLEEENKERAKREM) adopt a coiled-coil conformation. The chain crosses the membrane as a helical; Anchor for type IV membrane protein span at residues 199-216 (VMYSITVAFWLLNSWLWF). Topologically, residues 217–218 (RR) are mitochondrial intermembrane.

It belongs to the Tango11 family. As to quaternary structure, homodimer. Interacts with DNM1L. Interacts with C11orf65/MFI; the interaction inhibits MFF interaction with DNM1L.

It localises to the mitochondrion outer membrane. The protein localises to the peroxisome. Its subcellular location is the cytoplasmic vesicle. The protein resides in the secretory vesicle. It is found in the synaptic vesicle. Its function is as follows. Plays a role in mitochondrial and peroxisomal fission. Promotes the recruitment and association of the fission mediator dynamin-related protein 1 (DNM1L) to the mitochondrial surface. May be involved in regulation of synaptic vesicle membrane dynamics by recruitment of DNM1L to clathrin-containing vesicles. The polypeptide is Mitochondrial fission factor (MFF) (Pongo abelii (Sumatran orangutan)).